The following is a 231-amino-acid chain: NKG2-C type II integral membrane protein (231 aa).

Over residues 1–12 (MNKQRGTFSEVS) the composition is skewed to polar residues. The tract at residues 1–32 (MNKQRGTFSEVSLAQDPKRQQRKPKGNKSSIS) is disordered. The Cytoplasmic portion of the chain corresponds to 1–70 (MNKQRGTFSE…CQGLLPPPEK (70 aa)). A helical; Signal-anchor for type II membrane protein transmembrane segment spans residues 71–93 (LTAEVLGIICIVLMATVLKTIVL). The Extracellular portion of the chain corresponds to 94–231 (IPFLEQNNFS…SMIYHCKHKL (138 aa)). Residue N100 is glycosylated (N-linked (GlcNAc...) asparagine). Residues 116-229 (HCPEEWITYS…GSSMIYHCKH (114 aa)) enclose the C-type lectin domain. 3 disulfide bridges follow: C117/C128, C145/C227, and C206/C219. N149 and N178 each carry an N-linked (GlcNAc...) asparagine glycan.

As to quaternary structure, heterodimer with KLRD1; disulfide-linked. KLRD1-KLRC2 receptor complex interacts with TYROBP homodimer; this interaction is necessary for the expression on the cell surface. KLRD1-KLRC2 receptor complex can bind with low affinity to HLA-E loaded with self-peptides derived from the signal sequence of classical MHC class Ia. As to expression, expressed in NK cell subsets, in particular in adaptive CD57-positive NK cells (at protein level). Expressed in terminally differentiated cytotoxic gamma-delta T cells (at protein level). Expressed in alpha-beta T cells subsets (at protein level). KLRD1-KLRC1 and KLRD1-KLRC2 are differentially expressed within NK and T cell populations, with only minor subsets expressing both receptor complexes (at protein level).

The protein localises to the cell membrane. In terms of biological role, immune activating receptor involved in self-nonself discrimination. In complex with KLRD1 on cytotoxic lymphocyte subsets, recognizes non-classical major histocompatibility (MHC) class Ib HLA-E loaded with signal sequence-derived peptides from non-classical MHC class Ib HLA-G molecules, likely playing a role in the generation and effector functions of adaptive natural killer (NK) cells and in maternal-fetal tolerance during pregnancy. Regulates the effector functions of terminally differentiated cytotoxic lymphocyte subsets, and in particular may play a role in adaptive NK cell response to viral infection. Upon HLA-E-peptide binding, transmits intracellular signals via the adapter protein TYROBP/DAP12, triggering the phosphorylation of proximal signaling molecules and cell activation. This is NKG2-C type II integral membrane protein (KLRC2) from Homo sapiens (Human).